Here is a 274-residue protein sequence, read N- to C-terminus: Purine nucleoside phosphorylase YlmD (274 aa).

46-47 (LH) contributes to the inosine binding site. The Zn(2+) site is built by histidine 80, cysteine 125, histidine 142, cysteine 182, cysteine 183, cysteine 242, and cysteine 245. Arginine 262 serves as a coordination point for inosine.

Belongs to the purine nucleoside phosphorylase YfiH/LACC1 family. Requires Zn(2+) as cofactor.

It catalyses the reaction adenosine + phosphate = alpha-D-ribose 1-phosphate + adenine. The catalysed reaction is S-methyl-5'-thioadenosine + phosphate = 5-(methylsulfanyl)-alpha-D-ribose 1-phosphate + adenine. The enzyme catalyses inosine + phosphate = alpha-D-ribose 1-phosphate + hypoxanthine. It carries out the reaction adenosine + H2O + H(+) = inosine + NH4(+). Functionally, purine nucleoside enzyme that catalyzes the phosphorolysis of adenosine and inosine nucleosides, yielding D-ribose 1-phosphate and the respective free bases, adenine and hypoxanthine. Also catalyzes the phosphorolysis of S-methyl-5'-thioadenosine into adenine and S-methyl-5-thio-alpha-D-ribose 1-phosphate. Also has adenosine deaminase activity. The polypeptide is Purine nucleoside phosphorylase YlmD (Geobacillus stearothermophilus (strain DSM 13240 / CIP 106956 / 10)).